The sequence spans 280 residues: Large ribosomal subunit protein uL2 (280 aa).

Disordered stretches follow at residues 27–59 (STPEKSLVRPLHGRGGRNAHGRITTRHKGGGHK) and 225–280 (VMNP…KHSR). Composition is skewed to basic residues over residues 37–59 (LHGRGGRNAHGRITTRHKGGGHK) and 268–280 (IVRRRRTGKKHSR).

The protein belongs to the universal ribosomal protein uL2 family. In terms of assembly, part of the 50S ribosomal subunit. Forms a bridge to the 30S subunit in the 70S ribosome.

One of the primary rRNA binding proteins. Required for association of the 30S and 50S subunits to form the 70S ribosome, for tRNA binding and peptide bond formation. It has been suggested to have peptidyltransferase activity; this is somewhat controversial. Makes several contacts with the 16S rRNA in the 70S ribosome. This is Large ribosomal subunit protein uL2 from Mycobacterium bovis (strain ATCC BAA-935 / AF2122/97).